Here is a 462-residue protein sequence, read N- to C-terminus: Siroheme synthase (462 aa).

The segment at 1–203 (MEYLPLFANL…GKWEHAEKEI (203 aa)) is precorrin-2 dehydrogenase /sirohydrochlorin ferrochelatase. Residues 22–23 (NV) and 43–44 (DD) contribute to the NAD(+) site. S128 carries the phosphoserine modification. The interval 215-462 (GNVALVGAGP…NWFGKIIKEQ (248 aa)) is uroporphyrinogen-III C-methyltransferase. P224 serves as a coordination point for S-adenosyl-L-methionine. D247 functions as the Proton acceptor in the catalytic mechanism. K269 acts as the Proton donor in catalysis. S-adenosyl-L-methionine contacts are provided by residues 300 to 302 (GGD), I305, 330 to 331 (TA), M383, and G412.

It in the N-terminal section; belongs to the precorrin-2 dehydrogenase / sirohydrochlorin ferrochelatase family. In the C-terminal section; belongs to the precorrin methyltransferase family.

The catalysed reaction is uroporphyrinogen III + 2 S-adenosyl-L-methionine = precorrin-2 + 2 S-adenosyl-L-homocysteine + H(+). It carries out the reaction precorrin-2 + NAD(+) = sirohydrochlorin + NADH + 2 H(+). The enzyme catalyses siroheme + 2 H(+) = sirohydrochlorin + Fe(2+). It participates in cofactor biosynthesis; adenosylcobalamin biosynthesis; precorrin-2 from uroporphyrinogen III: step 1/1. It functions in the pathway cofactor biosynthesis; adenosylcobalamin biosynthesis; sirohydrochlorin from precorrin-2: step 1/1. The protein operates within porphyrin-containing compound metabolism; siroheme biosynthesis; precorrin-2 from uroporphyrinogen III: step 1/1. Its pathway is porphyrin-containing compound metabolism; siroheme biosynthesis; siroheme from sirohydrochlorin: step 1/1. It participates in porphyrin-containing compound metabolism; siroheme biosynthesis; sirohydrochlorin from precorrin-2: step 1/1. In terms of biological role, multifunctional enzyme that catalyzes the SAM-dependent methylations of uroporphyrinogen III at position C-2 and C-7 to form precorrin-2 via precorrin-1. Then it catalyzes the NAD-dependent ring dehydrogenation of precorrin-2 to yield sirohydrochlorin. Finally, it catalyzes the ferrochelation of sirohydrochlorin to yield siroheme. This Baumannia cicadellinicola subsp. Homalodisca coagulata protein is Siroheme synthase.